Consider the following 330-residue polypeptide: Lipoyl synthase (330 aa).

Residues cysteine 77, cysteine 82, cysteine 88, cysteine 103, cysteine 107, cysteine 110, and serine 317 each coordinate [4Fe-4S] cluster. Residues 89-306 (FNHGTATFMI…RSEAERMGFE (218 aa)) form the Radical SAM core domain.

It belongs to the radical SAM superfamily. Lipoyl synthase family. It depends on [4Fe-4S] cluster as a cofactor.

The protein resides in the cytoplasm. It carries out the reaction [[Fe-S] cluster scaffold protein carrying a second [4Fe-4S](2+) cluster] + N(6)-octanoyl-L-lysyl-[protein] + 2 oxidized [2Fe-2S]-[ferredoxin] + 2 S-adenosyl-L-methionine + 4 H(+) = [[Fe-S] cluster scaffold protein] + N(6)-[(R)-dihydrolipoyl]-L-lysyl-[protein] + 4 Fe(3+) + 2 hydrogen sulfide + 2 5'-deoxyadenosine + 2 L-methionine + 2 reduced [2Fe-2S]-[ferredoxin]. It participates in protein modification; protein lipoylation via endogenous pathway; protein N(6)-(lipoyl)lysine from octanoyl-[acyl-carrier-protein]: step 2/2. Catalyzes the radical-mediated insertion of two sulfur atoms into the C-6 and C-8 positions of the octanoyl moiety bound to the lipoyl domains of lipoate-dependent enzymes, thereby converting the octanoylated domains into lipoylated derivatives. The chain is Lipoyl synthase from Actinobacillus pleuropneumoniae serotype 3 (strain JL03).